A 173-amino-acid polypeptide reads, in one-letter code: Protein tyrosine phosphatase type IVA 3 (173 aa).

The Tyrosine-protein phosphatase domain maps to 8-161 (APVEVSYKHM…YRPKQRLRFK (154 aa)). Residues C49 and C104 are joined by a disulfide bond. The active-site Proton donor is the D72. Residue C104 is the Phosphocysteine intermediate of the active site. R110 is a substrate binding site. C170 carries the cysteine methyl ester modification. The S-farnesyl cysteine moiety is linked to residue C170. A propeptide spans 171–173 (CVM) (removed in mature form).

Belongs to the protein-tyrosine phosphatase family. As to quaternary structure, interacts with tubulin. In terms of processing, farnesylated. Farnesylation is required for membrane targeting. In terms of tissue distribution, mainly expressed in cardiomyocytes and skeletal muscle; also found in pancreas. Consistently overexpressed in colon cancer metastasis.

It localises to the cell membrane. It is found in the early endosome. It carries out the reaction O-phospho-L-tyrosyl-[protein] + H2O = L-tyrosyl-[protein] + phosphate. With respect to regulation, inhibited by sodium orthovanadate and peroxovanadium compounds, and by pentamidine. Protein tyrosine phosphatase which stimulates progression from G1 into S phase during mitosis. Enhances cell proliferation, cell motility and invasive activity, and promotes cancer metastasis. May be involved in the progression of cardiac hypertrophy by inhibiting intracellular calcium mobilization in response to angiotensin II. The protein is Protein tyrosine phosphatase type IVA 3 (PTP4A3) of Homo sapiens (Human).